A 59-amino-acid polypeptide reads, in one-letter code: Transcription elongation factor Spt4 (59 aa).

Zn(2+) contacts are provided by cysteine 4, cysteine 7, cysteine 16, and cysteine 19.

The protein belongs to the archaeal Spt4 family. As to quaternary structure, heterodimer composed of Spt4 and Spt5.

Stimulates transcription elongation. This Methanocaldococcus jannaschii (strain ATCC 43067 / DSM 2661 / JAL-1 / JCM 10045 / NBRC 100440) (Methanococcus jannaschii) protein is Transcription elongation factor Spt4.